We begin with the raw amino-acid sequence, 365 residues long: Palmitoyltransferase ZDHHC20 (365 aa).

Residues 1–14 are Cytoplasmic-facing; sequence MAPWTLWRCCQRVV. A helical membrane pass occupies residues 15 to 35; sequence GWVPVLFITFVVVWSYYAYVV. Over 36–53 the chain is Lumenal; that stretch reads ELCVFTIFGNEENGKTVV. A helical membrane pass occupies residues 54 to 74; it reads YLVAFHLFFVMFVWSYWMTIF. Residues 75–169 lie on the Cytoplasmic side of the membrane; it reads TSPASPSKEF…NNCVGFSNYK (95 aa). The DHHC domain occupies 126 to 176; that stretch reads RYCEKCQLIKPDRAHHCSACDSCILKMDHHCPWVNNCVGFSNYKFFLLFLL. Zn(2+) contacts are provided by C128 and C131. Substrate contacts are provided by residues K135 and 140-143; that span reads HHCS. H141, C142, C145, C148, and H155 together coordinate Zn(2+). The active-site S-palmitoyl cysteine intermediate is C156. Residue C162 coordinates Zn(2+). The helical transmembrane segment at 170-190 threads the bilayer; sequence FFLLFLLYSLLYCLFVAATVL. Topologically, residues 191–207 are lumenal; the sequence is EYFIKFWTNELTDTRAK. Residues 208–231 form a helical membrane-spanning segment; it reads FHVLFLFFVSAMFFISVLSLFSYH. The Cytoplasmic segment spans residues 232 to 365; sequence CWLVGKNRTT…NNHVTVAIEN (134 aa). A phosphoserine mark is found at S305, S330, and S339.

This sequence belongs to the DHHC palmitoyltransferase family. Post-translationally, autopalmitoylated (in vitro).

The protein localises to the golgi apparatus membrane. It localises to the cell membrane. It is found in the cytoplasm. Its subcellular location is the perinuclear region. The protein resides in the endoplasmic reticulum membrane. The protein localises to the endoplasmic reticulum-Golgi intermediate compartment membrane. It catalyses the reaction L-cysteinyl-[protein] + hexadecanoyl-CoA = S-hexadecanoyl-L-cysteinyl-[protein] + CoA. It carries out the reaction L-cysteinyl-[protein] + tetradecanoyl-CoA = S-tetradecanoyl-L-cysteinyl-[protein] + CoA. The enzyme catalyses L-cysteinyl-[protein] + octadecanoyl-CoA = S-octadecanoyl-L-cysteinyl-[protein] + CoA. Palmitoyltransferase that could catalyze the addition of palmitate onto various protein substrates. Catalyzes palmitoylation of Cys residues in the cytoplasmic C-terminus of EGFR, and modulates the duration of EGFR signaling by modulating palmitoylation-dependent EGFR internalization and degradation. Has a preference for acyl-CoA with C16 fatty acid chains. Can also utilize acyl-CoA with C14 and C18 fatty acid chains. May palmitoylate CALHM1 subunit of gustatory voltage-gated ion channels and modulate channel gating and kinetics. Functionally, (Microbial infection) Dominant palmitoyltransferase responsible for lipidation of SARS coronavirus-2/SARS-CoV-2 spike protein. Through a sequential action with ZDHHC9, rapidly and efficiently palmitoylates spike protein following its synthesis in the endoplasmic reticulum (ER). In the infected cell, promotes spike biogenesis by protecting it from premature ER degradation, increases half-life and controls the lipid organization of its immediate membrane environment. Once the virus has formed, spike palmitoylation controls fusion with the target cell. The protein is Palmitoyltransferase ZDHHC20 of Homo sapiens (Human).